Here is a 153-residue protein sequence, read N- to C-terminus: 3-hydroxyacyl-[acyl-carrier-protein] dehydratase FabZ (153 aa).

His-54 is an active-site residue.

It belongs to the thioester dehydratase family. FabZ subfamily.

It is found in the cytoplasm. The catalysed reaction is a (3R)-hydroxyacyl-[ACP] = a (2E)-enoyl-[ACP] + H2O. Functionally, involved in unsaturated fatty acids biosynthesis. Catalyzes the dehydration of short chain beta-hydroxyacyl-ACPs and long chain saturated and unsaturated beta-hydroxyacyl-ACPs. The chain is 3-hydroxyacyl-[acyl-carrier-protein] dehydratase FabZ from Shewanella pealeana (strain ATCC 700345 / ANG-SQ1).